We begin with the raw amino-acid sequence, 449 residues long: UDP-N-acetylmuramoylalanine--D-glutamate ligase (449 aa).

119 to 125 (GTNGKTT) lines the ATP pocket.

It belongs to the MurCDEF family.

It localises to the cytoplasm. The catalysed reaction is UDP-N-acetyl-alpha-D-muramoyl-L-alanine + D-glutamate + ATP = UDP-N-acetyl-alpha-D-muramoyl-L-alanyl-D-glutamate + ADP + phosphate + H(+). It functions in the pathway cell wall biogenesis; peptidoglycan biosynthesis. Functionally, cell wall formation. Catalyzes the addition of glutamate to the nucleotide precursor UDP-N-acetylmuramoyl-L-alanine (UMA). The protein is UDP-N-acetylmuramoylalanine--D-glutamate ligase of Lactococcus lactis subsp. cremoris (strain SK11).